We begin with the raw amino-acid sequence, 956 residues long: Cytolysin RtxA (956 aa).

Positions 48-58 (LTIPKDYDIEK) are cholesterol recognition/amino acid consensus (CRAC) region 1. Cholesterol recognition/amino acid consensus (CARC) region regions lie at residues 280–287 (KAISSYVL) and 340–348 (KFGYDGDSL). The segment at 349 to 354 (LAEYQR) is cholesterol recognition/amino acid consensus (CRAC) region 2. The segment at 444-453 (RHAHYLERNL) is cholesterol recognition/amino acid consensus (CARC) region 3. Residue lysine 558 is the site of N6-myristoyl lysine attachment. One copy of the Hemolysin-type calcium-binding 1 repeat lies at 613–639 (VNAGSGNDDIFAGQGKMNVDGGTGHDR). Lysine 689 carries N6-myristoyl lysine lipidation. Hemolysin-type calcium-binding repeat units lie at residues 722-756 (GSQFSDTFKGSKFADIFHGGDGNDTLEGNDGDDRL) and 757-791 (FGGNGDDHLYGGNGDDLLDGGKGNDVINGGDGNDV).

This sequence belongs to the RTX prokaryotic toxin (TC 1.C.11) family. Myristoylated by RtxC; the toxin only becomes active when modified. Mainly myristoylated; a very minor fraction is acylated with hydroxymyristoyl, lauroyl and palmitoleyl chains fatty acyl groups. Fatty acylation is involved in binding to host membranes and promotes the irreversible insertion of RtxA into the host cell membrane.

It is found in the secreted. Its subcellular location is the host cell membrane. Bacterial cytolysin that attacks host cell membranes and causes cell rupture by forming a pore. Binds and permeabilizes target cells by forming cation-selective pores. Constitutes the key virulence cytotoxin of K.kingae. Binds cholesterol and oligosaccharides on the surface of host cells. Does not bind beta-2 integrin (ITGB2) on the host cell surface. This Kingella kingae protein is Cytolysin RtxA.